A 109-amino-acid polypeptide reads, in one-letter code: Nucleoid-associated protein AHA_2212 (109 aa).

2 disordered regions span residues 1 to 23 (MFGK…RMQK) and 88 to 109 (NKSK…KMPF). Residues 11–23 (MKQAQQMQERMQK) show a composition bias toward low complexity.

It belongs to the YbaB/EbfC family. In terms of assembly, homodimer.

It localises to the cytoplasm. It is found in the nucleoid. Functionally, binds to DNA and alters its conformation. May be involved in regulation of gene expression, nucleoid organization and DNA protection. This chain is Nucleoid-associated protein AHA_2212, found in Aeromonas hydrophila subsp. hydrophila (strain ATCC 7966 / DSM 30187 / BCRC 13018 / CCUG 14551 / JCM 1027 / KCTC 2358 / NCIMB 9240 / NCTC 8049).